A 399-amino-acid chain; its full sequence is Elongation factor Tu (399 aa).

The tr-type G domain occupies 10–204 (KPHVNIGTIG…AVDASIPEPE (195 aa)). The tract at residues 19–26 (GHVDHGKT) is G1. 19 to 26 (GHVDHGKT) is a binding site for GTP. Residue T26 coordinates Mg(2+). The G2 stretch occupies residues 60 to 64 (GITIN). The segment at 81 to 84 (DCPG) is G3. GTP contacts are provided by residues 81–85 (DCPGH) and 136–139 (NKCD). A G4 region spans residues 136–139 (NKCD). A G5 region spans residues 174-176 (SGL).

The protein belongs to the TRAFAC class translation factor GTPase superfamily. Classic translation factor GTPase family. EF-Tu/EF-1A subfamily. As to quaternary structure, monomer.

The protein resides in the cytoplasm. It carries out the reaction GTP + H2O = GDP + phosphate + H(+). In terms of biological role, GTP hydrolase that promotes the GTP-dependent binding of aminoacyl-tRNA to the A-site of ribosomes during protein biosynthesis. This chain is Elongation factor Tu, found in Prochlorococcus marinus (strain MIT 9312).